Reading from the N-terminus, the 493-residue chain is Glutamate--tRNA ligase (493 aa).

Positions 10-20 (PSPTGTPHVGL) match the 'HIGH' region motif. A 'KMSKS' region motif is present at residues 254–258 (KLSKR). Lys-257 contributes to the ATP binding site.

The protein belongs to the class-I aminoacyl-tRNA synthetase family. Glutamate--tRNA ligase type 1 subfamily. In terms of assembly, monomer.

Its subcellular location is the cytoplasm. The enzyme catalyses tRNA(Glu) + L-glutamate + ATP = L-glutamyl-tRNA(Glu) + AMP + diphosphate. Its function is as follows. Catalyzes the attachment of glutamate to tRNA(Glu) in a two-step reaction: glutamate is first activated by ATP to form Glu-AMP and then transferred to the acceptor end of tRNA(Glu). This Corynebacterium glutamicum (strain ATCC 13032 / DSM 20300 / JCM 1318 / BCRC 11384 / CCUG 27702 / LMG 3730 / NBRC 12168 / NCIMB 10025 / NRRL B-2784 / 534) protein is Glutamate--tRNA ligase.